The chain runs to 374 residues: Regulator of G-protein signaling 20 (374 aa).

Residues 1–11 are compositionally biased toward polar residues; that stretch reads MPRLSQDNQQG. 2 disordered regions span residues 1-21 and 135-158; these read MPRL…RPSR and PPGG…PPMG. The span at 12 to 21 shows a compositional bias: basic residues; sequence HQKHFSRPSR. The RGS domain occupies 248 to 364; that stretch reads SFDKLMLTPA…MNSALYKDLL (117 aa).

Forms a complex with G(alpha)z/i2 subunits and mu-opioid receptors; the formation of this complex results in mu-opioid receptor desensitization. Interacts with OPRM1. Fatty acylated. Heavily palmitoylated in the cysteine string motif. Post-translationally, N- and O-glycosylated in synapsomal membranes. In terms of processing, serine phosphorylated in synapsomal membranes. Sumoylated with SUMO1 and SUMO2 in synaptosomes. The sumoylated forms act as a scaffold for sequestering mu-opioid receptor-activated G(alpha) subunits. As to expression, retinal-specific. Expressed throughout the retina, including photoreceptors.

It localises to the membrane. It is found in the nucleus. The protein resides in the cytoplasm. Its function is as follows. Inhibits signal transduction by increasing the GTPase activity of G protein alpha subunits thereby driving them into their inactive GDP-bound form. Binds selectively to G(z)-alpha and G(alpha)-i2 subunits, accelerates their GTPase activity and regulates their signaling activities. The G(z)-alpha activity is inhibited by the phosphorylation and palmitoylation of the G-protein. Negatively regulates mu-opioid receptor-mediated activation of the G-proteins. The sequence is that of Regulator of G-protein signaling 20 (RGS20) from Bos taurus (Bovine).